We begin with the raw amino-acid sequence, 245 residues long: Probable phosphatase YcdX (245 aa).

9 residues coordinate Zn(2+): histidine 7, histidine 9, histidine 15, histidine 40, glutamate 73, histidine 101, histidine 131, aspartate 192, and histidine 194.

Belongs to the PHP family. In terms of assembly, homotrimer. It depends on Zn(2+) as a cofactor.

The polypeptide is Probable phosphatase YcdX (Escherichia coli O139:H28 (strain E24377A / ETEC)).